The chain runs to 292 residues: Enoyl-CoA hydratase domain-containing protein 2, mitochondrial (292 aa).

The transit peptide at 1–35 directs the protein to the mitochondrion; sequence MLRVLCLLRPWRPLRARGCASDGAAGGSEIQVRAL. An N6-acetyllysine; alternate modification is found at K97. An N6-succinyllysine; alternate modification is found at K97.

The protein belongs to the enoyl-CoA hydratase/isomerase family.

It is found in the mitochondrion. The protein is Enoyl-CoA hydratase domain-containing protein 2, mitochondrial (ECHDC2) of Homo sapiens (Human).